The sequence spans 319 residues: Acetyl-coenzyme A carboxylase carboxyl transferase subunit alpha (319 aa).

Residues 35 to 296 (NIDEEVHRLR…KAQLLADLAD (262 aa)) form the CoA carboxyltransferase C-terminal domain.

Belongs to the AccA family. As to quaternary structure, acetyl-CoA carboxylase is a heterohexamer composed of biotin carboxyl carrier protein (AccB), biotin carboxylase (AccC) and two subunits each of ACCase subunit alpha (AccA) and ACCase subunit beta (AccD).

It is found in the cytoplasm. The enzyme catalyses N(6)-carboxybiotinyl-L-lysyl-[protein] + acetyl-CoA = N(6)-biotinyl-L-lysyl-[protein] + malonyl-CoA. Its pathway is lipid metabolism; malonyl-CoA biosynthesis; malonyl-CoA from acetyl-CoA: step 1/1. In terms of biological role, component of the acetyl coenzyme A carboxylase (ACC) complex. First, biotin carboxylase catalyzes the carboxylation of biotin on its carrier protein (BCCP) and then the CO(2) group is transferred by the carboxyltransferase to acetyl-CoA to form malonyl-CoA. The protein is Acetyl-coenzyme A carboxylase carboxyl transferase subunit alpha of Escherichia coli O127:H6 (strain E2348/69 / EPEC).